Here is a 538-residue protein sequence, read N- to C-terminus: Lipid scramblase CLPTM1L (538 aa).

The Cytoplasmic segment spans residues 1–10 (MWSGRSSFTS). Residues 11-31 (LVVGVFVVYVVHTCWVMYGIV) traverse the membrane as a helical segment. Over 32-284 (YTRPCSGDAN…VKGIFVDTNL (253 aa)) the chain is Extracellular. N-linked (GlcNAc...) asparagine glycans are attached at residues Asn91, Asn101, and Asn229. The chain crosses the membrane as a helical span at residues 285 to 305 (YFLALTFFVAAFHLLFDFLAF). Residues 306 to 324 (KNDISFWKKKKSMIGMSTK) lie on the Cytoplasmic side of the membrane. A helical transmembrane segment spans residues 325–342 (AVLWRCFSTVVIFLFLLD). The Extracellular segment spans residues 343–346 (EQTS). Residues 347–364 (LLVLVPAGVGAAIELWKV) traverse the membrane as a helical segment. The Cytoplasmic segment spans residues 365-402 (KKALKMTIFWRGLMPEFQFGTYSESERKTEEYDTQAMK). The helical transmembrane segment at 403 to 423 (YLSYLLYPLCVGGAVYSLLNI) threads the bilayer. The Extracellular portion of the chain corresponds to 424 to 428 (KYKSW). A helical transmembrane segment spans residues 429-449 (YSWLINSFVNGVYAFGFLFML). At 450–538 (PQLFVNYKLK…EKATRAPHTD (89 aa)) the chain is on the cytoplasmic side.

Belongs to the CLPTM1 family. Ubiquitously expressed.

It localises to the endoplasmic reticulum membrane. The enzyme catalyses a 6-(alpha-D-glucosaminyl)-1-(1,2-diacyl-sn-glycero-3-phospho)-1D-myo-inositol(in) = a 6-(alpha-D-glucosaminyl)-1-(1,2-diacyl-sn-glycero-3-phospho)-1D-myo-inositol(out). It catalyses the reaction 6-(alpha-D-glucosaminyl)-(1-octadecanoyl,2-(9Z)-octadecenoyl-sn-glycero-3-phospho)-1D-myo-inositol(in) = 6-(alpha-D-glucosaminyl)-(1-octadecanoyl,2-(9Z)-octadecenoyl-sn-glycero-3-phospho)-1D-myo-inositol(out). It carries out the reaction a 1,2-diacyl-sn-glycero-3-phospho-(1D-myo-inositol)(in) = a 1,2-diacyl-sn-glycero-3-phospho-(1D-myo-inositol)(out). The catalysed reaction is a 1,2-diacyl-sn-glycero-3-phosphocholine(in) = a 1,2-diacyl-sn-glycero-3-phosphocholine(out). The enzyme catalyses a 1,2-diacyl-sn-glycero-3-phosphoethanolamine(in) = a 1,2-diacyl-sn-glycero-3-phosphoethanolamine(out). Scramblase that mediates the translocation of glucosaminylphosphatidylinositol (alpha-D-GlcN-(1-6)-(1,2-diacyl-sn-glycero-3-phospho)-1D-myo-inositol, GlcN-PI) across the endoplasmic reticulum (ER) membrane, from the cytosolic leaflet to the luminal leaflet of the ER membrane, where it participates in the biosynthesis of glycosylphosphatidylinositol (GPI). GPI is a lipid glycoconjugate involved in post-translational modification of proteins. Can also translocate 1,2-diacyl-sn-glycero-3-phospho-(1D-myo-inositol) (phosphatidylinositol or PI), as well as several other phospholipids (1,2-diacyl-sn-glycero-3-phosphocholine, 1,2-diacyl-sn-glycero-3-phosphoethanolamine), and N-acetylglucosaminylphosphatidylinositol (GlcNAc-PI) in vitro. In Homo sapiens (Human), this protein is Lipid scramblase CLPTM1L (CLPTM1L).